We begin with the raw amino-acid sequence, 156 residues long: Glutaredoxin-2, mitochondrial (156 aa).

Residues 1–19 (MSWRRAASVGRRLVASGRI) constitute a mitochondrion transit peptide. The Glutaredoxin domain occupies 50-150 (VNQIQETISN…PLVHQCYLKK (101 aa)). Position 61 (C61) interacts with [2Fe-2S] cluster. K67 lines the glutathione pocket. The residue at position 70 (C70) is an S-glutathionyl cysteine; alternate. A disulfide bond links C70 and C73. Glutathione is bound by residues Q102 and V114. C146 is a [2Fe-2S] cluster binding site.

Belongs to the glutaredoxin family. As to quaternary structure, monomer; active form. Homodimer; inactive form. The homodimer is probably linked by 1 2Fe-2S cluster. In terms of tissue distribution, widely expressed. Highly expressed in testis, and at much lower level in kidney and brain.

It localises to the mitochondrion. The protein localises to the nucleus. The 2Fe-2S present in the homodimer leads to inactivation of the enzyme. The 2Fe-2S may serve as a redox sensor: the presence of one-electron oxidants or reductants leading to the loss of the 2Fe-2S cluster, subsequent monomerization and activation of the enzyme. Functionally, glutathione-dependent oxidoreductase that facilitates the maintenance of mitochondrial redox homeostasis upon induction of apoptosis by oxidative stress. Involved in response to hydrogen peroxide and regulation of apoptosis caused by oxidative stress. Acts as a very efficient catalyst of monothiol reactions because of its high affinity for protein glutathione-mixed disulfides. Can receive electrons not only from glutathione (GSH), but also from thioredoxin reductase supporting both monothiol and dithiol reactions. Efficiently catalyzes both glutathionylation and deglutathionylation of mitochondrial complex I, which in turn regulates the superoxide production by the complex. Overexpression decreases the susceptibility to apoptosis and prevents loss of cardiolipin and cytochrome c release. This Mus musculus (Mouse) protein is Glutaredoxin-2, mitochondrial (Glrx2).